Here is a 466-residue protein sequence, read N- to C-terminus: Ribulose bisphosphate carboxylase large chain (466 aa).

Lys-5 is subject to N6,N6,N6-trimethyllysine. Substrate is bound by residues Asn-114 and Thr-164. Lys-166 (proton acceptor) is an active-site residue. Lys-168 is a substrate binding site. 3 residues coordinate Mg(2+): Lys-192, Asp-194, and Glu-195. Residue Lys-192 is modified to N6-carboxylysine. Catalysis depends on His-285, which acts as the Proton acceptor. Substrate-binding residues include Arg-286, His-318, and Ser-370.

The protein belongs to the RuBisCO large chain family. Type I subfamily. In terms of assembly, heterohexadecamer of 8 large chains and 8 small chains; disulfide-linked. The disulfide link is formed within the large subunit homodimers. Mg(2+) is required as a cofactor. Post-translationally, the disulfide bond which can form in the large chain dimeric partners within the hexadecamer appears to be associated with oxidative stress and protein turnover.

Its subcellular location is the plastid. The protein resides in the chloroplast. The catalysed reaction is 2 (2R)-3-phosphoglycerate + 2 H(+) = D-ribulose 1,5-bisphosphate + CO2 + H2O. The enzyme catalyses D-ribulose 1,5-bisphosphate + O2 = 2-phosphoglycolate + (2R)-3-phosphoglycerate + 2 H(+). RuBisCO catalyzes two reactions: the carboxylation of D-ribulose 1,5-bisphosphate, the primary event in carbon dioxide fixation, as well as the oxidative fragmentation of the pentose substrate in the photorespiration process. Both reactions occur simultaneously and in competition at the same active site. The chain is Ribulose bisphosphate carboxylase large chain from Drosophyllum lusitanicum (Portuguese sundew).